The chain runs to 141 residues: uncharacterized protein (141 aa).

This sequence belongs to the mimivirus L163/R849 family.

This is an uncharacterized protein from Acanthamoeba polyphaga mimivirus (APMV).